The chain runs to 158 residues: Cyclic pyranopterin monophosphate synthase (158 aa).

Residues 75–77 and 111–112 each bind substrate; these read LCH and ME. Asp126 is a catalytic residue.

This sequence belongs to the MoaC family. In terms of assembly, homohexamer; trimer of dimers.

The catalysed reaction is (8S)-3',8-cyclo-7,8-dihydroguanosine 5'-triphosphate = cyclic pyranopterin phosphate + diphosphate. The protein operates within cofactor biosynthesis; molybdopterin biosynthesis. Functionally, catalyzes the conversion of (8S)-3',8-cyclo-7,8-dihydroguanosine 5'-triphosphate to cyclic pyranopterin monophosphate (cPMP). The chain is Cyclic pyranopterin monophosphate synthase from Caulobacter vibrioides (strain ATCC 19089 / CIP 103742 / CB 15) (Caulobacter crescentus).